The following is a 401-amino-acid chain: Beta-ketoadipyl-CoA thiolase (401 aa).

Cysteine 90 serves as the catalytic Acyl-thioester intermediate. Catalysis depends on proton acceptor residues histidine 357 and cysteine 387.

Belongs to the thiolase-like superfamily. Thiolase family.

The enzyme catalyses succinyl-CoA + acetyl-CoA = 3-oxoadipyl-CoA + CoA. It functions in the pathway aromatic compound metabolism; phenylacetate degradation. Its function is as follows. Catalyzes thiolytic cleavage of beta-ketoadipyl-CoA to succinyl-CoA and acetyl-CoA. The sequence is that of Beta-ketoadipyl-CoA thiolase (paaJ) from Escherichia coli.